Reading from the N-terminus, the 114-residue chain is Hydrogenase maturation factor HypA (114 aa).

Position 2 (His-2) interacts with Ni(2+). Positions 70, 73, 86, and 89 each coordinate Zn(2+).

Belongs to the HypA/HybF family.

Its function is as follows. Involved in the maturation of [NiFe] hydrogenases. Required for nickel insertion into the metal center of the hydrogenase. In Crocosphaera subtropica (strain ATCC 51142 / BH68) (Cyanothece sp. (strain ATCC 51142)), this protein is Hydrogenase maturation factor HypA.